Reading from the N-terminus, the 181-residue chain is Respiratory supercomplex factor 1, mitochondrial (181 aa).

In terms of domain architecture, HIG1 spans 6–97; it reads LPSSMEDNPQ…TERQQRREFE (92 aa). 2 consecutive transmembrane segments (helical) span residues 33 to 49 and 69 to 86; these read PLIPLGCAATCYALYRA and IYAQFFTLVAVVAGGMYF. The disordered stretch occupies residues 136 to 160; the sequence is AAKEAGKRPAPNKIPEQDAARSAIE.

It belongs to the RCF1 family. As to quaternary structure, associates with the respiratory chain complex III/complex IV supercomplex.

The protein localises to the mitochondrion membrane. Its function is as follows. Cytochrome c oxidase subunit which plays a role in assembly of respiratory supercomplexes. This is Respiratory supercomplex factor 1, mitochondrial (rcf1) from Neosartorya fischeri (strain ATCC 1020 / DSM 3700 / CBS 544.65 / FGSC A1164 / JCM 1740 / NRRL 181 / WB 181) (Aspergillus fischerianus).